A 271-amino-acid polypeptide reads, in one-letter code: Ribosomal RNA small subunit methyltransferase A (271 aa).

S-adenosyl-L-methionine contacts are provided by Asn-18, Leu-20, Gly-45, Glu-66, Asp-91, and Asn-112.

Belongs to the class I-like SAM-binding methyltransferase superfamily. rRNA adenine N(6)-methyltransferase family. RsmA subfamily.

Its subcellular location is the cytoplasm. The enzyme catalyses adenosine(1518)/adenosine(1519) in 16S rRNA + 4 S-adenosyl-L-methionine = N(6)-dimethyladenosine(1518)/N(6)-dimethyladenosine(1519) in 16S rRNA + 4 S-adenosyl-L-homocysteine + 4 H(+). Functionally, specifically dimethylates two adjacent adenosines (A1518 and A1519) in the loop of a conserved hairpin near the 3'-end of 16S rRNA in the 30S particle. May play a critical role in biogenesis of 30S subunits. The polypeptide is Ribosomal RNA small subunit methyltransferase A (Vibrio cholerae serotype O1 (strain ATCC 39315 / El Tor Inaba N16961)).